A 303-amino-acid polypeptide reads, in one-letter code: Probable cell division protein WhiA (303 aa).

A DNA-binding region (H-T-H motif) is located at residues Ser272–Leu303.

This sequence belongs to the WhiA family.

Functionally, involved in cell division and chromosome segregation. The sequence is that of Probable cell division protein WhiA from Streptococcus mutans serotype c (strain ATCC 700610 / UA159).